The following is a 797-amino-acid chain: Protocadherin beta-11 (797 aa).

The N-terminal stretch at 1–26 is a signal peptide; that stretch reads MENQGTRTQQIRQVLLLFVLLGMSQA. The Extracellular segment spans residues 27–690; that stretch reads GSETWSFSVA…AQADSLTVYL (664 aa). 5 Cadherin domains span residues 35–133, 138–242, 247–347, 352–451, and 456–561; these read VAEE…SPIF, MLLE…SPEF, YEVK…APEI, ITSP…APTF, and YTLF…SPFV. Residues N418, N436, N487, and N567 are each glycosylated (N-linked (GlcNAc...) asparagine). One can recognise a Cadherin 6 domain in the interval 568–671; it reads GSAPCTELVP…LVDGFSQPYL (104 aa). A helical membrane pass occupies residues 691–711; it reads VVALASVSSLFLFSVLLFVAV. Topologically, residues 712–797 are cytoplasmic; it reads RLCRRSRAAS…TFRNSFGFNF (86 aa).

The protein resides in the cell membrane. Its function is as follows. Potential calcium-dependent cell-adhesion protein. May be involved in the establishment and maintenance of specific neuronal connections in the brain. The polypeptide is Protocadherin beta-11 (PCDHB11) (Homo sapiens (Human)).